A 162-amino-acid polypeptide reads, in one-letter code: Small ribosomal subunit protein uS7m (162 aa).

The protein belongs to the universal ribosomal protein uS7 family. Part of the small ribosomal subunit.

It is found in the mitochondrion. Functionally, one of the primary rRNA binding proteins, it binds directly to 16S-like rRNA where it nucleates assembly of the head domain of the small subunit. In Dictyostelium discoideum (Social amoeba), this protein is Small ribosomal subunit protein uS7m (mrps7).